The following is a 368-amino-acid chain: Isocitrate dehydrogenase [NAD] subunit 2, mitochondrial (368 aa).

Residues 1-14 (MFRQSIVKQSCRFL) constitute a mitochondrion transit peptide. Substrate-binding residues include Arg118, Arg128, Arg149, and Asp236. Residues Asp236, Asp262, and Asp266 each contribute to the Mg(2+) site.

It belongs to the isocitrate and isopropylmalate dehydrogenases family. As to quaternary structure, octamer of two non-identical subunits IDH1 and IDH2. Requires Mg(2+) as cofactor. It depends on Mn(2+) as a cofactor.

Its subcellular location is the mitochondrion. It carries out the reaction D-threo-isocitrate + NAD(+) = 2-oxoglutarate + CO2 + NADH. Functionally, performs an essential role in the oxidative function of the citric acid cycle. The protein is Isocitrate dehydrogenase [NAD] subunit 2, mitochondrial (IDH2) of Kluyveromyces lactis (strain ATCC 8585 / CBS 2359 / DSM 70799 / NBRC 1267 / NRRL Y-1140 / WM37) (Yeast).